The primary structure comprises 370 residues: 3,7-dimethylxanthine N-methyltransferase CkTbS (370 aa).

Position 24 (Tyr-24) interacts with S-adenosyl-L-homocysteine. A theobromine-binding site is contributed by Thr-31. S-adenosyl-L-homocysteine contacts are provided by Cys-67, Asn-72, Asp-104, Leu-105, Ser-139, and Phe-140. The theobromine site is built by Tyr-157, His-160, and Trp-161. Asn-178 contacts Mg(2+). His-226 is a theobromine binding site. The Mg(2+) site is built by Asp-264, Phe-266, and Asn-267. Residue Phe-322 coordinates theobromine.

This sequence belongs to the methyltransferase superfamily. Type-7 methyltransferase family. Requires Mg(2+) as cofactor.

It carries out the reaction 7-methylxanthine + S-adenosyl-L-methionine = theobromine + S-adenosyl-L-homocysteine + H(+). It functions in the pathway alkaloid biosynthesis. Its function is as follows. Involved in the biosynthesis of caffeine in cv. Puer. Involved in the biosynthesis of theacrine in cv. Kucha, a caffeine-like xanthine alkaloid with diverse beneficial biological activities including anti-depressive, sedative, and hypnotic activities, improving learning and memory, increasing exercise activity, and preventing nonalcoholic fatty liver disease. Catalyzes the conversion of 7-methylxanthine (7mX) to theobromine but not able to convert paraxanthine to caffeine. In Camellia sinensis var. assamica (Assam tea), this protein is 3,7-dimethylxanthine N-methyltransferase CkTbS.